The primary structure comprises 253 residues: uncharacterized protein (253 aa).

I6–G30 contributes to the NADP(+) binding site. Residue S140 coordinates substrate. Catalysis depends on Y153, which acts as the Proton acceptor.

Belongs to the short-chain dehydrogenases/reductases (SDR) family.

This is an uncharacterized protein from Escherichia coli (strain K12).